A 74-amino-acid polypeptide reads, in one-letter code: Ribosome modulation factor (74 aa).

It belongs to the ribosome modulation factor family.

It is found in the cytoplasm. Its function is as follows. During stationary phase, converts 70S ribosomes to an inactive dimeric form (100S ribosomes). The polypeptide is Ribosome modulation factor (Cellvibrio japonicus (strain Ueda107) (Pseudomonas fluorescens subsp. cellulosa)).